The sequence spans 245 residues: Octanoyltransferase (245 aa).

A BPL/LPL catalytic domain is found at Gln54–Ile242. Substrate is bound by residues Arg93–His100, Ala173–Gly175, and Gly186–Ser188. Cys204 acts as the Acyl-thioester intermediate in catalysis.

Belongs to the LipB family.

The protein localises to the cytoplasm. It catalyses the reaction octanoyl-[ACP] + L-lysyl-[protein] = N(6)-octanoyl-L-lysyl-[protein] + holo-[ACP] + H(+). It functions in the pathway protein modification; protein lipoylation via endogenous pathway; protein N(6)-(lipoyl)lysine from octanoyl-[acyl-carrier-protein]: step 1/2. Catalyzes the transfer of endogenously produced octanoic acid from octanoyl-acyl-carrier-protein onto the lipoyl domains of lipoate-dependent enzymes. Lipoyl-ACP can also act as a substrate although octanoyl-ACP is likely to be the physiological substrate. The protein is Octanoyltransferase of Bartonella quintana (strain Toulouse) (Rochalimaea quintana).